Here is a 3392-residue protein sequence, read N- to C-terminus: MNNQRKKTGRPSFNMLKRARNRVSTGSQLAKRFSKGLLSGQGPMKLVMAFIAFLRFLAIPPTAGILARWSSFKKNGAIKVLRGFKKEISSMLNIMNRRKRSVTMLLMLLPTALAFHLTTRGGEPHMIVSKQERGKSLLFKTSAGVNMCTLIAMDLGELCEDTMTYKCPRITEAEPDDVDCWCNATDTWVTYGTCSQTGEHRRDKRSVALAPHVGLGLETRTETWMSSEGAWKQIQKVETWALRHPGFTVIALFLAHAIGTSITQKGIIFILLMLVTPSMAMRCVGIGNRDFVEGLSGATWVDVVLEHGSCVTTMAKNKPTLDIELLKTEVTNPAVLRKLCIEAKISNTTTDSRCPTQGEATLVEEQDANFVCRRTFVDRGWGNGCGLFGKGSLLTCAKFKCVTKLEGKIVQYENLKYSVIVTVHTGDQHQVGNETTEHGTIATITPQAPTSEIQLTDYGALTLDCSPRTGLDFNEMVLLTMKEKSWLVHKQWFLDLPLPWTSGASTSQETWNRQDLLVTFKTAHAKKQEVVVLGSQEGAMHTALTGATEIQTSGTTTIFAGHLKCRLKMDKLTLKGTSYVMCTGSFKLEKEVAETQHGTVLVQVKYEGTDAPCKIPFSTQDEKGVTQNGRLITANPIVTDKEKPVNIETEPPFGESYIVVGAGEKALKLSWFKKGSSIGKMFEATARGARRMAILGDTAWDFGSIGGVFTSVGKLVHQVFGTAYGVLFSGVSWTMKIGIGILLTWLGLNSRSTSLSMTCIAVGMVTLYLGVMVQADSGCVINWKGRELKCGSGIFVTNEVHTWTEQYKFQADSPKRLSAAIGRAWEEGVCGIRSATRLENIMWKQISNELNHILLENDIKFTVVVGNANGILAQGKKMIRPQPMEHKYSWKSWGKAKIIGADIQNTTFIIDGPDTPECPDEQRAWNIWEVEDYGFGIFTTNIWLKLRDSYTQMCDHRLMSAAIKDSKAVHADMGYWIESEKNETWKLARASFIEVKTCIWPKSHTLWSNGVLESEMIIPKMYGGPISQHNYRPGYFTQTAGPWHLGKLELDFDLCEGTTVVVDEHCGSRGPSLRTTTVTGKIIHEWCCRSCTLPPLRFRGEDGCWYGMEIRPVKEKEENLVRSMVSAGSGEVDSFSLGILCVSIMIEEVMRSRWSRKMLMTGTLAVFLLLIMGQLTWNDLIRLCIMVGANASDKMGMGTTYLALMATFKMRPMFAVGLLFRRLTSREVLLLTIGLSLVASVELPNSLEELGDGLAMGIMMLKLLTEFQPHQLWTTLLSLTFIKTTLSLDYAWKTTAMVLSIVSLFPLCLSTTSQKTTWLPVLLGSFGCKPLTMFLITENEIWGRKSWPLNEGIMAIGIVSILLSSLLKNDVPLAGPLIAGGMLIACYVISGSSADLSLEKAAEVSWEEEAEHSGTSHNILVEVQDDGTMKIKDEERDDTLTILLKATLLAVSGVYPMSIPATLFVWYFWQKKKQRSGVLWDTPSPPEVERAVLDDGIYRILQRGLLGRSQVGVGVFQDGVFHTMWHVTRGAVLMYQGKRLEPSWASVKKDLISYGGGWRFQGSWNTGEEVQVIAVEPGKNPKNVQTTPGTFKTPEGEVGAIALDFKPGTSGSPIVNREGKIVGLYGNGVVTTSGTYVSAIAQAKASQEGPLPEIEDEVFKKRNLTIMDLHPGSGKTRRYLPAIVREAIKRKLRTLILAPTRVVASEMAEALKGMPIRYQTTAVKSEHTGREIVDLMCHATFTMRLLSPVRVPNYNMIIMDEAHFTDPASIAARGYISTRVGMGEAAAIFMTATPPGSVEAFPQSNAVIQDEERDIPERSWNSGYDWITDFPGKTVWFVPSIKSGNDIANCLRKNGKRVIQLSRKTFDTEYQKTKNNDWDYVVTTDISEMGANFRADRVIDPRRCLKPVILKDGPERVILAGPMPVTVASAAQRRGRIGRNQNKEGDQYVYMGQPLNNDEDHAHWTEAKMLLDNINTPEGIIPALFEPEREKSAAIDGEYRLRGEARKTFVELMRRGDLPVWLSYKVASEGFQYSDRRWCFDGERNNQVLEENMDVEIWTKEGERKKLRPRWLDARTYSDPLALREFKEFAAGRRSVSGDLILEIGKLPQHLTLRAQNALDNLVMLHNSEQGGKAYRHAMEELPDTIETLMLLALIAVLTGGVTLFFLSGKGLGKTSIGLLCVTASSALLWMASVEPHWIAASIILEFFLMVLLIPEPDRQRTPQDNQLAYVVIGLLFMILTVAANEMGLLETTKKDLGIGHVAAENHQHATILDVDLHPASAWTLYAVATTVITPMMRHTIENTTANISLTAIANQAAILMGLDKGWPISKMDLGVPLLALGCYSQVNPLTLTAAVLMLVAHYAIIGPGLQAKATREAQKRTAAGIMKNPTVDGIVAIDLDPVVYDAKFEKQLGQIMLLILCTSQILLMRTTWALCESITLATGPLTTLWEGSPGKFWNTTIAVSMANIFRGSYLAGAGLAFSLMKSLGGGRRGTGAQGETLGEKWKRQLNQLSKSEFNTYKRSGIMEVDRSEAKEGLKRGETTKHAVSRGTAKLRWFVERNLVKPEGKVIDLGCGRGGWSYYCAGLKKVTEVKGYTKGGPGHEEPIPMATYGWNLVKLHSGKDVFFMPPEKCDTLLCDIGESSPNPTIEEGRTLRVLKMVEPWLRGNQFCIKILNPYMPSVVETLEQMQRKHGGMLVRNPLSRNSTHEMYWVSCGTGNIVSAVNMTSRMLLNRFTMAHRKPTYERDVDLGAGTRHVAVEPEVANLDIIGQRIENIKNEHKSTWHYDEDNPYKTWAYHGSYEVKPSGSASSMVNGVVRLLTKPWDVIPMVTQIAMTDTTPFGQQRVFKEKVDTRTPRAKRGTAQIMEVTAKWLWGFLSRNKKPRICTREEFTRKVRSNAAIGAVFVDENQWNSAKEAVEDERFWDLVHRERELHKQGKCATCVYNMMGKREKKLGEFGKAKGSRAIWYMWLGARFLEFEALGFMNEDHWFSRENSLSGVEGEGLHKLGYILRDISKIPGGNMYADDTAGWDTRITEDDLQNEAKITDIMEPEHALLATSIFKLTYQNKVVRVQRPAKNGTVMDVISRRDQRGSGQVGTYGLNTFTNMEVQLIRQMESEGIFFPSELESPNLAERVLDWLEKHGAERLKRMAISGDDCVVKPIDDRFATALIALNDMGKVRKDIPQWEPSKGWNDWQQVPFCSHHFHQLIMKDGREIVVPCRNQDELVGRARVSQGAGWSLRETACLGKSYAQMWQLMYFHRRDLRLAANAICSAVPVDWVPTSRTTWSIHAHHQWMTTEDMLSVWNRVWIEENPWMEDKTHVSSWEEVPYLGKREDQWCGSLIGLTARATWATNIQVAINQVRRLIGNENYLDYMTSMKRFKNESDPEGALW.

Residues 1–101 lie on the Cytoplasmic side of the membrane; that stretch reads MNNQRKKTGR…LNIMNRRKRS (101 aa). The hydrophobic; homodimerization of capsid protein C stretch occupies residues 33–74; sequence FSKGLLSGQGPMKLVMAFIAFLRFLAIPPTAGILARWSSFKK. A propeptide spans 101–114 (ER anchor for the protein C, removed in mature form by serine protease NS3); sequence SVTMLLMLLPTALA. Residues 102–119 form a helical membrane-spanning segment; the sequence is VTMLLMLLPTALAFHLTT. Topologically, residues 120-242 are extracellular; sequence RGGEPHMIVS…QIQKVETWAL (123 aa). The N-linked (GlcNAc...) asparagine; by host glycan is linked to Asn-183. Residues 243–260 traverse the membrane as a helical segment; sequence RHPGFTVIALFLAHAIGT. Position 261 (Ser-261) is a topological domain, cytoplasmic. A helical membrane pass occupies residues 262–280; sequence ITQKGIIFILLMLVTPSMA. The Extracellular portion of the chain corresponds to 281–725; it reads MRCVGIGNRD…VHQVFGTAYG (445 aa). 4 cysteine pairs are disulfide-bonded: Cys-283/Cys-310, Cys-340/Cys-401, Cys-354/Cys-385, and Cys-372/Cys-396. A glycan (N-linked (GlcNAc...) asparagine; by host) is linked at Asn-347. Asn-433 carries an N-linked (GlcNAc...) asparagine; by host glycan. 2 disulfide bridges follow: Cys-465/Cys-565 and Cys-582/Cys-613. The helical intramembrane region spans 726–746; that stretch reads VLFSGVSWTMKIGIGILLTWL. Topologically, residues 747–752 are extracellular; it reads GLNSRS. The helical intramembrane region spans 753–775; sequence TSLSMTCIAVGMVTLYLGVMVQA. Topologically, residues 776–1125 are extracellular; it reads DSGCVINWKG…KEENLVRSMV (350 aa). Disulfide bonds link Cys-779-Cys-790, Cys-830-Cys-918, Cys-954-Cys-998, Cys-1055-Cys-1104, Cys-1066-Cys-1088, and Cys-1087-Cys-1091. N-linked (GlcNAc...) asparagine; by host glycosylation is found at Asn-905 and Asn-982. A helical transmembrane segment spans residues 1126-1146; that stretch reads SAGSGEVDSFSLGILCVSIMI. The Cytoplasmic segment spans residues 1147 to 1157; it reads EEVMRSRWSRK. Residues 1158–1178 traverse the membrane as a helical segment; sequence MLMTGTLAVFLLLIMGQLTWN. Topologically, residues 1179-1199 are lumenal; sequence DLIRLCIMVGANASDKMGMGT. Asn-1190 carries an N-linked (GlcNAc...) asparagine; by host glycan. A helical membrane pass occupies residues 1200–1220; sequence TYLALMATFKMRPMFAVGLLF. Residues 1221–1289 are Cytoplasmic-facing; that stretch reads RRLTSREVLL…TFIKTTLSLD (69 aa). A helical transmembrane segment spans residues 1290–1310; sequence YAWKTTAMVLSIVSLFPLCLS. Over 1311–1315 the chain is Lumenal; sequence TTSQK. The helical transmembrane segment at 1316-1336 threads the bilayer; that stretch reads TTWLPVLLGSFGCKPLTMFLI. The Cytoplasmic segment spans residues 1337–1346; sequence TENEIWGRKS. The chain crosses the membrane as a helical span at residues 1347–1367; it reads WPLNEGIMAIGIVSILLSSLL. The Lumenal segment spans residues 1368-1370; that stretch reads KND. Residues 1371-1391 traverse the membrane as a helical segment; that stretch reads VPLAGPLIAGGMLIACYVISG. The Cytoplasmic portion of the chain corresponds to 1392-1447; sequence SSADLSLEKAAEVSWEEEAEHSGTSHNILVEVQDDGTMKIKDEERDDTLTILLKAT. The tract at residues 1398–1437 is interacts with and activates NS3 protease; sequence LEKAAEVSWEEEAEHSGTSHNILVEVQDDGTMKIKDEERD. Residues 1448-1468 constitute an intramembrane region (helical); the sequence is LLAVSGVYPMSIPATLFVWYF. Residues 1469–2148 lie on the Cytoplasmic side of the membrane; sequence WQKKKQRSGV…MEELPDTIET (680 aa). A Peptidase S7 domain is found at 1476-1653; sequence SGVLWDTPSP…KASQEGPLPE (178 aa). Residues His-1526, Asp-1550, and Ser-1610 each act as charge relay system; for serine protease NS3 activity in the active site. The 157-residue stretch at 1656–1812 folds into the Helicase ATP-binding domain; it reads DEVFKKRNLT…QSNAVIQDEE (157 aa). 1669–1676 serves as a coordination point for ATP; the sequence is LHPGSGKT. Positions 1760 to 1763 match the DEAH box motif; that stretch reads DEAH. One can recognise a Helicase C-terminal domain in the interval 1822–1989; sequence SGYDWITDFP…IIPALFEPER (168 aa). The residue at position 1864 (Lys-1864) is an N6-acetyllysine; by host. The helical transmembrane segment at 2149-2169 threads the bilayer; that stretch reads LMLLALIAVLTGGVTLFFLSG. Residues 2170–2171 are Lumenal-facing; sequence KG. An intramembrane region (helical) is located at residues 2172–2192; the sequence is LGKTSIGLLCVTASSALLWMA. Position 2193 (Ser-2193) is a topological domain, lumenal. Residues 2194-2214 form a helical membrane-spanning segment; the sequence is VEPHWIAASIILEFFLMVLLI. Over 2215–2229 the chain is Cytoplasmic; it reads PEPDRQRTPQDNQLA. Residues 2230–2250 form a helical membrane-spanning segment; that stretch reads YVVIGLLFMILTVAANEMGLL. The Lumenal portion of the chain corresponds to 2251 to 2276; sequence ETTKKDLGIGHVAAENHQHATILDVD. Residues 2277-2297 constitute an intramembrane region (helical); sequence LHPASAWTLYAVATTVITPMM. The Lumenal segment spans residues 2298–2349; that stretch reads RHTIENTTANISLTAIANQAAILMGLDKGWPISKMDLGVPLLALGCYSQVNP. Residues Asn-2303 and Asn-2307 are each glycosylated (N-linked (GlcNAc...) asparagine; by host). Residues 2350–2370 traverse the membrane as a helical segment; it reads LTLTAAVLMLVAHYAIIGPGL. Residues 2371 to 2415 are Cytoplasmic-facing; it reads QAKATREAQKRTAAGIMKNPTVDGIVAIDLDPVVYDAKFEKQLGQ. The chain crosses the membrane as a helical span at residues 2416–2436; it reads IMLLILCTSQILLMRTTWALC. Over 2437-2461 the chain is Lumenal; that stretch reads ESITLATGPLTTLWEGSPGKFWNTT. The N-linked (GlcNAc...) asparagine; by host glycan is linked to Asn-2459. The helical transmembrane segment at 2462–2482 threads the bilayer; it reads IAVSMANIFRGSYLAGAGLAF. The Cytoplasmic portion of the chain corresponds to 2483-3392; it reads SLMKSLGGGR…NESDPEGALW (910 aa). The 262-residue stretch at 2495 to 2756 folds into the mRNA cap 0-1 NS5-type MT domain; that stretch reads TGAQGETLGE…DVDLGAGTRH (262 aa). S-adenosyl-L-methionine contacts are provided by Ser-2549, Gly-2579, Trp-2580, Thr-2597, Lys-2598, Asp-2624, Val-2625, Ile-2640, and Tyr-2711. The RdRp catalytic domain maps to 3021–3170; sequence NMYADDTAGW…PIDDRFATAL (150 aa).

The protein in the N-terminal section; belongs to the class I-like SAM-binding methyltransferase superfamily. mRNA cap 0-1 NS5-type methyltransferase family. Capsid protein C: Homodimer. Interacts (via N-terminus) with host EXOC1 (via C-terminus); this interaction results in EXOC1 degradation through the proteasome degradation pathway. In terms of assembly, forms heterodimers with envelope protein E in the endoplasmic reticulum and Golgi. As to quaternary structure, homodimer; in the endoplasmic reticulum and Golgi. Interacts with protein prM. Interacts with non-structural protein 1. Homodimer; Homohexamer when secreted. Interacts with envelope protein E. In terms of assembly, interacts (via N-terminus) with serine protease NS3. As to quaternary structure, forms a heterodimer with serine protease NS3. May form homooligomers. Forms a heterodimer with NS2B. Interacts with NS4B. Interacts with unphosphorylated RNA-directed RNA polymerase NS5; this interaction stimulates RNA-directed RNA polymerase NS5 guanylyltransferase activity. Interacts with host SHFL. In terms of assembly, interacts with host MAVS; this interaction inhibits the synthesis of IFN-beta. Interacts with host SHFL. Interacts with host AUP1; the interaction occurs in the presence of Dengue virus NS4B and induces lipophagy which facilitates production of virus progeny particles. As to quaternary structure, interacts with serine protease NS3. Homodimer. Interacts with host STAT2; this interaction inhibits the phosphorylation of the latter, and, when all viral proteins are present (polyprotein), targets STAT2 for degradation. Interacts with serine protease NS3. In terms of processing, specific enzymatic cleavages in vivo yield mature proteins. Cleavages in the lumen of endoplasmic reticulum are performed by host signal peptidase, wereas cleavages in the cytoplasmic side are performed by the Serine protease NS3. Signal cleavage at the 2K-4B site requires a prior NS3 protease-mediated cleavage at the 4A-2K site. Post-translationally, a C-terminally truncated form of non-structural protein 2A, results from partial cleavage by NS3. Cleaved in post-Golgi vesicles by a host furin, releasing the mature small envelope protein M, and peptide pr. This cleavage is incomplete as up to 30% of viral particles still carry uncleaved prM. In terms of processing, the excreted form is glycosylated and this is required for efficient secretion of the protein from infected cells. Post-translationally, phosphorylated on serines residues. This phosphorylation may trigger NS5 nuclear localization. N-glycosylated. In terms of processing, acetylated by host KAT5. Acetylation modulates NS3 RNA-binding and unwinding activities and plays an important positive role for viral replication.

The protein resides in the virion. It localises to the host nucleus. The protein localises to the secreted. It is found in the virion membrane. Its subcellular location is the host endoplasmic reticulum membrane. The protein resides in the host mitochondrion. It catalyses the reaction Selective hydrolysis of -Xaa-Xaa-|-Yaa- bonds in which each of the Xaa can be either Arg or Lys and Yaa can be either Ser or Ala.. The enzyme catalyses RNA(n) + a ribonucleoside 5'-triphosphate = RNA(n+1) + diphosphate. The catalysed reaction is a ribonucleoside 5'-triphosphate + H2O = a ribonucleoside 5'-diphosphate + phosphate + H(+). It carries out the reaction ATP + H2O = ADP + phosphate + H(+). It catalyses the reaction a 5'-end (5'-triphosphoguanosine)-ribonucleoside in mRNA + S-adenosyl-L-methionine = a 5'-end (N(7)-methyl 5'-triphosphoguanosine)-ribonucleoside in mRNA + S-adenosyl-L-homocysteine. The enzyme catalyses a 5'-end (N(7)-methyl 5'-triphosphoguanosine)-ribonucleoside in mRNA + S-adenosyl-L-methionine = a 5'-end (N(7)-methyl 5'-triphosphoguanosine)-(2'-O-methyl-ribonucleoside) in mRNA + S-adenosyl-L-homocysteine + H(+). In terms of biological role, plays a role in virus budding by binding to membrane and gathering the viral RNA into a nucleocapsid that forms the core of a mature virus particle. During virus entry, may induce genome penetration in host cytoplasm after hemifusion induced by surface proteins. Can migrate tot cell nucleus where it modulates host functions. Prevents premature fusion activity of envelope proteins in trans Golgi by binding to envelope protein E at pH6.0. After virion release in extracellular space gets dissociated from E dimers. Its function is as follows. Acts as a chaperone for envelope protein E during intracellular virion assembly by masking and inactivating envelope protein E fusion peptide. prM is the only viral peptide matured by host furin in the trans-Golgi network. Presumably to avoid catastrophic activation of the viral fusion activity in acidic GolGi compartment prior to virion release. prM-E cleavage is ineficient, and many virions are only partially matured. These uncleaved prM would play a role in immune evasion. Functionally, may play a role in virus budding. Exerts cytotoxic effects by activating a mitochondrial apoptotic pathway through M extodomain. May display a viroporin activity. In terms of biological role, binds to host cell surface receptor and mediates fusion between viral and cellular membranes. Envelope protein is synthesized in the endoplasmic reticulum in the form of heterodimer with protein prM. They play a role in virion budding in the ER, and the newly formed immature particle is covered with 60 spikes composed of heterodimer between precursor prM and envelope protein E. The virion is transported to the Golgi apparatus where the low pH causes dissociation of PrM-E heterodimers and formation of E homodimers. prM-E cleavage is ineficient, and many virions are only partially matured. These uncleaved prM would play a role in immune evasion. Involved in immune evasion, pathogenesis and viral replication. Once cleaved off the polyprotein, is targeted to three destinations: the viral replication cycle, the plasma membrane and the extracellular compartment. May play a role in viral genome replication. Assist membrane bending and envelopment of genomic RNA at the endoplasmic reticulum. Excreted as a hexameric lipoparticle that plays a role against host immune response. Its function is as follows. Component of the viral RNA replication complex that functions in virion assembly and antagonizes the host immune response. Functionally, required cofactor for the serine protease function of NS3. May have membrane-destabilizing activity and form viroporins. In terms of biological role, displays three enzymatic activities: serine protease, NTPase and RNA helicase. NS3 serine protease, in association with NS2B, performs its autocleavage and cleaves the polyprotein at dibasic sites in the cytoplasm: C-prM, NS2A-NS2B, NS2B-NS3, NS3-NS4A, NS4A-2K and NS4B-NS5. NS3 RNA helicase binds RNA and unwinds dsRNA in the 3' to 5' direction. Regulates the ATPase activity of the NS3 helicase activity. NS4A allows NS3 helicase to conserve energy during unwinding. Plays a role in the inhibition of the host innate immune response. Interacts with host MAVS and thereby prevents the interaction between RIGI and MAVS. In turn, IFN-beta production is impaired. Interacts with host AUP1 which mediates induction of lipophagy in host cells and facilitates production of virus progeny particles. Its function is as follows. Functions as a signal peptide for NS4B and is required for the interferon antagonism activity of the latter. Functionally, inhibits interferon (IFN)-induced host STAT1 phosphorylation and nuclear translocation, thereby preventing the establishment of cellular antiviral state by blocking the IFN-alpha/beta pathway. In terms of biological role, replicates the viral (+) and (-) genome, and performs the capping of genomes in the cytoplasm. NS5 methylates viral RNA cap at guanine N-7 and ribose 2'-O positions. Besides its role in RNA genome replication, also prevents the establishment of cellular antiviral state by blocking the interferon-alpha/beta (IFN-alpha/beta) signaling pathway. Inhibits host TYK2 and STAT2 phosphorylation, thereby preventing activation of JAK-STAT signaling pathway. The sequence is that of Genome polyprotein from Dengue virus type 1 (strain Brazil/97-11/1997) (DENV-1).